The following is a 520-amino-acid chain: MSSTRHGGNFQLELAAGTLLPKEMPGINAFTFYDYLLDLAQSGASPESVLSVEPIYHRLAYISRLVAWIDASGFSHGTLPRLFLSTEPPTAEQIKSNLSPSDIEQILFFVESETKQQVGCDLWKVLRQFLLTASTLKWVKNRPCSKPDWFKVNEFRNGGAGYARQAMAITFGLTNESCARKLIMTYVSGDLHRHQNDSGEFFRLDVGESDEDAFSCGLLLDKRSGMLGASMDMAVMRKDPETAAVAEIDVFEIKCRAKYTFCPENLMHPLSACYERMLDSPGEETIRDFLFGIRAPGVEYFPPDSVPSAAEALLTCAKGWASPDAKASTRDRGSLIEKRHLQLNREVRSTVYLFGEPCLKTNSIRPIVWPSGGTSCELPIFINPKHQNFKQIFVQTYVLADYYPDAKISQYLVTFIGRSRRANEFGRVLRLDGGREDLAEPISLDHIHAIPILLIKTPVVIDRDHFSDLSSLGKEAFEFSVKETWGNAADAAAAPRIGRGCAAKKPGPTELLCAPESTQH.

The protein belongs to the herpesviridae alkaline nuclease family. In terms of assembly, interacts with major DNA-binding protein; this interaction increases the nuclease processivity of the alkaline exonuclease.

The protein resides in the host nucleus. The protein localises to the host cytoplasm. Functionally, plays a role in processing non linear or branched viral DNA intermediates in order to promote the production of mature packaged unit-length linear progeny viral DNA molecules. Exhibits endonuclease and exonuclease activities and accepts both double-stranded and single-stranded DNA as substrate. Exonuclease digestion of DNA is in the 5'-&gt; 3' direction and the products are 5'-monophosphate nucleosides. Additionally, forms a recombinase with the major DNA-binding protein, which displays strand exchange activity. The chain is Alkaline nuclease (UL12) from Psittacid herpesvirus 1 (isolate Amazon parrot/-/97-0001/1997) (PsHV-1).